A 272-amino-acid chain; its full sequence is Indole-3-glycerol phosphate synthase (272 aa).

It belongs to the TrpC family.

It catalyses the reaction 1-(2-carboxyphenylamino)-1-deoxy-D-ribulose 5-phosphate + H(+) = (1S,2R)-1-C-(indol-3-yl)glycerol 3-phosphate + CO2 + H2O. Its pathway is amino-acid biosynthesis; L-tryptophan biosynthesis; L-tryptophan from chorismate: step 4/5. The chain is Indole-3-glycerol phosphate synthase from Mycobacterium sp. (strain JLS).